A 236-amino-acid chain; its full sequence is Phospholipid hydroperoxide glutathione peroxidase 1, chloroplastic (236 aa).

Over residues 1–16 (MVSMTTSSSSYGTFST) the composition is skewed to low complexity. The segment at 1–24 (MVSMTTSSSSYGTFSTVVNSSRPN) is disordered. The N-terminal 64 residues, 1-64 (MVSMTTSSSS…PINPGFLFKS (64 aa)), are a transit peptide targeting the chloroplast. Residue Cys111 is part of the active site.

The protein belongs to the glutathione peroxidase family. In terms of tissue distribution, expressed in leaves, stems, flowers, green siliques and seeds.

It localises to the plastid. The protein localises to the chloroplast. The catalysed reaction is a hydroperoxy polyunsaturated fatty acid + 2 glutathione = a hydroxy polyunsaturated fatty acid + glutathione disulfide + H2O. Its function is as follows. Protects cells and enzymes from oxidative damage, by catalyzing the reduction of hydrogen peroxide, lipid peroxides and organic hydroperoxide, by glutathione. This Arabidopsis thaliana (Mouse-ear cress) protein is Phospholipid hydroperoxide glutathione peroxidase 1, chloroplastic (GPX1).